The sequence spans 94 residues: Putative pterin-4-alpha-carbinolamine dehydratase (94 aa).

This sequence belongs to the pterin-4-alpha-carbinolamine dehydratase family.

It catalyses the reaction (4aS,6R)-4a-hydroxy-L-erythro-5,6,7,8-tetrahydrobiopterin = (6R)-L-erythro-6,7-dihydrobiopterin + H2O. The sequence is that of Putative pterin-4-alpha-carbinolamine dehydratase from Mycobacterium avium (strain 104).